The sequence spans 428 residues: Glutamate-1-semialdehyde 2,1-aminomutase 1 (428 aa).

Lysine 268 carries the post-translational modification N6-(pyridoxal phosphate)lysine.

Belongs to the class-III pyridoxal-phosphate-dependent aminotransferase family. HemL subfamily. Homodimer. Pyridoxal 5'-phosphate is required as a cofactor.

It is found in the cytoplasm. The enzyme catalyses (S)-4-amino-5-oxopentanoate = 5-aminolevulinate. It functions in the pathway porphyrin-containing compound metabolism; protoporphyrin-IX biosynthesis; 5-aminolevulinate from L-glutamyl-tRNA(Glu): step 2/2. The protein is Glutamate-1-semialdehyde 2,1-aminomutase 1 of Geobacillus thermodenitrificans (strain NG80-2).